The primary structure comprises 585 residues: A-type ATP synthase subunit A (585 aa).

231–238 (GPFGSGKT) lines the ATP pocket.

This sequence belongs to the ATPase alpha/beta chains family. As to quaternary structure, has multiple subunits with at least A(3), B(3), C, D, E, F, H, I and proteolipid K(x).

Its subcellular location is the cell membrane. It catalyses the reaction ATP + H2O + 4 H(+)(in) = ADP + phosphate + 5 H(+)(out). Component of the A-type ATP synthase that produces ATP from ADP in the presence of a proton gradient across the membrane. The A chain is the catalytic subunit. This Thermococcus gammatolerans (strain DSM 15229 / JCM 11827 / EJ3) protein is A-type ATP synthase subunit A.